Here is a 150-residue protein sequence, read N- to C-terminus: Transcriptional repressor NrdR (150 aa).

Positions 1-26 (MKCPFCGNSDSKVVDSRPDKGGSGIR) are disordered. A zinc finger spans residues 3 to 34 (CPFCGNSDSKVVDSRPDKGGSGIRRRRECEQC). One can recognise an ATP-cone domain in the interval 49–139 (PLVLKKDGRR…VYRSFRDINE (91 aa)).

It belongs to the NrdR family. Zn(2+) is required as a cofactor.

Its function is as follows. Negatively regulates transcription of bacterial ribonucleotide reductase nrd genes and operons by binding to NrdR-boxes. In Pelobacter propionicus (strain DSM 2379 / NBRC 103807 / OttBd1), this protein is Transcriptional repressor NrdR.